The primary structure comprises 432 residues: Mitochondrial distribution and morphology protein 12 (432 aa).

Positions methionine 1–isoleucine 432 constitute an SMP-LTD domain. Disordered stretches follow at residues tryptophan 182–arginine 273 and glutamine 354–glutamine 377. The segment covering threonine 214–serine 234 has biased composition (low complexity). Basic and acidic residues-rich tracts occupy residues threonine 243–aspartate 253 and glutamine 355–proline 364.

This sequence belongs to the MDM12 family. Component of the ER-mitochondria encounter structure (ERMES) or MDM complex, composed of mmm1, mdm10, mdm12 and mdm34. A mmm1 homodimer associates with one molecule of mdm12 on each side in a pairwise head-to-tail manner, and the SMP-LTD domains of mmm1 and mdm12 generate a continuous hydrophobic tunnel for phospholipid trafficking.

It localises to the mitochondrion outer membrane. It is found in the endoplasmic reticulum membrane. Component of the ERMES/MDM complex, which serves as a molecular tether to connect the endoplasmic reticulum (ER) and mitochondria. Components of this complex are involved in the control of mitochondrial shape and protein biogenesis, and function in nonvesicular lipid trafficking between the ER and mitochondria. Mdm12 is required for the interaction of the ER-resident membrane protein mmm1 and the outer mitochondrial membrane-resident beta-barrel protein mdm10. The mdm12-mmm1 subcomplex functions in the major beta-barrel assembly pathway that is responsible for biogenesis of all mitochondrial outer membrane beta-barrel proteins, and acts in a late step after the SAM complex. The mdm10-mdm12-mmm1 subcomplex further acts in the TOM40-specific pathway after the action of the mdm12-mmm1 complex. Essential for establishing and maintaining the structure of mitochondria and maintenance of mtDNA nucleoids. The sequence is that of Mitochondrial distribution and morphology protein 12 from Aspergillus oryzae (strain ATCC 42149 / RIB 40) (Yellow koji mold).